The primary structure comprises 218 residues: Ras-related protein RABE1e (218 aa).

22–29 (GDSGVGKS) is a GTP binding site. Positions 44-52 (FITTIGIDF) match the Effector region motif. Residues 70–74 (DTAGQ), 128–131 (NKAD), and 159–160 (SA) each bind GTP. A disordered region spans residues 182–218 (TESDTKAEPQGIKITKQDANKASSSSTNEKSACCSYV). Residues 201 to 211 (NKASSSSTNEK) show a composition bias toward polar residues. 2 S-geranylgeranyl cysteine lipidation sites follow: Cys214 and Cys215.

This sequence belongs to the small GTPase superfamily. Rab family. As to quaternary structure, interacts with PI5K2.

It localises to the golgi apparatus membrane. It is found in the cell membrane. Its function is as follows. Involved in membrane trafficking from the Golgi to the plasma membrane. This is Ras-related protein RABE1e (RABE1E) from Arabidopsis thaliana (Mouse-ear cress).